Here is a 206-residue protein sequence, read N- to C-terminus: Cytochrome c biogenesis ATP-binding export protein CcmA (206 aa).

The 202-residue stretch at 4 to 205 folds into the ABC transporter domain; sequence LEGIDLTCIR…AGAAIQRLQL (202 aa). 36–43 provides a ligand contact to ATP; it reads GPNGSGKT.

The protein belongs to the ABC transporter superfamily. CcmA exporter (TC 3.A.1.107) family. As to quaternary structure, the complex is composed of two ATP-binding proteins (CcmA) and two transmembrane proteins (CcmB).

It localises to the cell inner membrane. It carries out the reaction heme b(in) + ATP + H2O = heme b(out) + ADP + phosphate + H(+). Part of the ABC transporter complex CcmAB involved in the biogenesis of c-type cytochromes; once thought to export heme, this seems not to be the case, but its exact role is uncertain. Responsible for energy coupling to the transport system. This chain is Cytochrome c biogenesis ATP-binding export protein CcmA, found in Nitrosospira multiformis (strain ATCC 25196 / NCIMB 11849 / C 71).